The primary structure comprises 116 residues: UPF0654 protein C869.09 (116 aa).

The disordered stretch occupies residues 32–116 (LKEHGSESHY…LLEEVDDESK (85 aa)). Residues 39–48 (SHYTTGTTRG) are compositionally biased toward polar residues. The span at 49–64 (QKADADDAGELREEGF) shows a compositional bias: basic and acidic residues.

Belongs to the UPF0654 (con-6) family.

It localises to the cytoplasm. Its subcellular location is the nucleus. This Schizosaccharomyces pombe (strain 972 / ATCC 24843) (Fission yeast) protein is UPF0654 protein C869.09.